The sequence spans 290 residues: MSSHESPRLLFVHAHPDDETLTTGGTIAHYVARSAEVHVVTCTLGEEGEVIGERYAQLAVDHADQLGGYRIAELTAALQSLGLRGPRYLGGAGHWRDSGMAGTPSRGRQRWVDADLDEAVGALVAVIGEVRPHVVVTYDPNGGYGHPDHIQTHVVTTRAVAAAPEAVGWTVPKFYWTVTAISAMTAGLQALGDVPSEWIRVNAEDIPFGFGDDQIDAVVDVTAELPAKVGAMRAHATQITVAPDGRAFALSNNIALPVLGEEHYVLVSGEAGPRDSRGWETDLLAGLDLE.

Residues histidine 15, aspartate 18, and histidine 149 each coordinate Zn(2+).

The protein belongs to the MshB deacetylase family. It depends on Zn(2+) as a cofactor.

It carries out the reaction 1D-myo-inositol 2-acetamido-2-deoxy-alpha-D-glucopyranoside + H2O = 1D-myo-inositol 2-amino-2-deoxy-alpha-D-glucopyranoside + acetate. Its function is as follows. Catalyzes the deacetylation of 1D-myo-inositol 2-acetamido-2-deoxy-alpha-D-glucopyranoside (GlcNAc-Ins) in the mycothiol biosynthesis pathway. The polypeptide is 1D-myo-inositol 2-acetamido-2-deoxy-alpha-D-glucopyranoside deacetylase (mshB) (Mycolicibacterium smegmatis (strain ATCC 700084 / mc(2)155) (Mycobacterium smegmatis)).